The following is a 165-amino-acid chain: MIHCRSMDSPIGPLILAGHGSVLTNLQMVDQTYEPSRVGWLPENGAFAEAVSQLDAYFAGELTEFAIELDLCGTEFQQRVWQALLTIPYGETRSYGEIAEQVGAPGAARAVGLANSRNPIAIIVPCHRVIGASGQLIGYGGGLNRKLTLLELEKHQVLTSLTLFD.

The Nucleophile; methyl group acceptor role is filled by C126.

Belongs to the MGMT family.

It is found in the cytoplasm. It catalyses the reaction a 6-O-methyl-2'-deoxyguanosine in DNA + L-cysteinyl-[protein] = S-methyl-L-cysteinyl-[protein] + a 2'-deoxyguanosine in DNA. The catalysed reaction is a 4-O-methyl-thymidine in DNA + L-cysteinyl-[protein] = a thymidine in DNA + S-methyl-L-cysteinyl-[protein]. Involved in the cellular defense against the biological effects of O6-methylguanine (O6-MeG) and O4-methylthymine (O4-MeT) in DNA. Repairs the methylated nucleobase in DNA by stoichiometrically transferring the methyl group to a cysteine residue in the enzyme. This is a suicide reaction: the enzyme is irreversibly inactivated. This is Methylated-DNA--protein-cysteine methyltransferase from Mycobacterium leprae (strain TN).